Reading from the N-terminus, the 1121-residue chain is MFIVYYSNQLEKQKEILSSLFKSLPPEDPFQQDIILVQSPNMAQWLQIELAKETGISANLKFPMPASFIWQLYAQNLPATALENPFDKDSMMWRLMRLIPIFLEKENFSPLRNYLSSSPHSEQYKLYQLSSKIADLFDQYLVYRPEWIFAWEKGEDEQITDQIQKQQPNLNATLFAQIQGNTKWQGELWRALVVDVKSDVNEATHRAALHNQFLALLADKKAPKKLPSRIFIFGIPALPTAYLNILQAISSEVDIHLFFNNPCQEYWGDISDLRLDYLRSRQRYQFNKQDENQPLFSEDQLSQLENAQFDVTYQKENLQLGNPLLAAWGKMGRDFLYILVRDEEHIPTYPVNAYQEIESNSLLGQLQSQILHLENKPLNIAKNDRTLTLHSCHSAMREVEVLHDYLLDLFNQDPSLTPKDVVVMVADINQYTPYIQAVFGQKNGDVPQIPFSLSDNKLSESDVLVSSYLTLLRLKESNFSAEDVLVLLDIPAMRERFNISLADLPLVREWVTDSGIRFGLQKNQDGINFNSWQAGLERMILGYAMREEQGIWQDSLGLNSSYGLKGELAGNLSHFFTALSALHETLQQAHSIEKWQEILTALLSDFFVRNEDTSDMIFYIQEKINELAEHLKTLHFNEELQAEVIADVITMQLEDAPNSLKFLAGKVNFCTLLPMRSVPFKVVCLLGMNDADYPRTQTPNSFDLMQYHYQKGDRVRRDDDRYLFLEALLAARDYCYISYVGRSITDNQPKEPSVLVSQLLDYINQGQKENVLTVIEHPMTAFSPDNFKNNEKFTRSFATKWLPIAQFDASSNNSEFAVTMTENLEKIEEVELDALVSFVENPVKFFFEKQLGVYFRDKDERIADSENFTLSGLDNYSLNNDLIYLDEQNFADYFRQAEVKGVLPRAEFGKVYAENIRDNVLEFKKKIADLGEAKHASVDFNLSVDWQNENQKIRLFGYMDALFGDDSQVIHWHFAKYKDRYCIRPWIYYLIQCVTQENAVPAKLITQDKVLELPPIEREVALAQLQIYVKDYLQSQIEIQLVPTVRNISDFIVSDENSVSEKLQELTESNGFGPKADPYWSRVLAQTSRFKQPENIAKLLKQTKAWFGLLFAQKKTRKTQS.

The protein belongs to the RecC family. In terms of assembly, heterotrimer of RecB, RecC and RecD. All subunits contribute to DNA-binding.

Its function is as follows. A helicase/nuclease that prepares dsDNA breaks (DSB) for recombinational DNA repair. Binds to DSBs and unwinds DNA via a highly rapid and processive ATP-dependent bidirectional helicase activity. Unwinds dsDNA until it encounters a Chi (crossover hotspot instigator) sequence from the 3' direction. Cuts ssDNA a few nucleotides 3' to the Chi site. The properties and activities of the enzyme are changed at Chi. The Chi-altered holoenzyme produces a long 3'-ssDNA overhang and facilitates RecA-binding to the ssDNA for homologous DNA recombination and repair. Holoenzyme degrades any linearized DNA that is unable to undergo homologous recombination. In the holoenzyme this subunit recognizes the wild-type Chi sequence, and when added to isolated RecB increases its ATP-dependent helicase processivity. This chain is RecBCD enzyme subunit RecC, found in Haemophilus influenzae (strain ATCC 51907 / DSM 11121 / KW20 / Rd).